Reading from the N-terminus, the 518-residue chain is Protein FAM98A (518 aa).

Disordered stretches follow at residues 297 to 415 and 434 to 518; these read VLMG…GHSS and GSGY…HYTS. The segment covering 302–311 has biased composition (basic and acidic residues); sequence VPDRGGRPNE. Gly residues-rich tracts occupy residues 349–364, 383–396, and 405–415; these read GGRGGHEQGGGRGGRG, WTDGGSGGGGGYQD, and QPGGYHGGHSS. The segment covering 447 to 459 has biased composition (basic and acidic residues); the sequence is RYQDGGHHGDRGG. A compositionally biased stretch (gly residues) spans 460-484; the sequence is GRGGRGGRGGRGGRAGQGGGWGGRG. Positions 488–504 are enriched in low complexity; that stretch reads YHQGGQFEQHFQHGGYQ. A compositionally biased stretch (polar residues) spans 505 to 518; the sequence is YNHSGFGQGRHYTS.

Belongs to the FAM98 family. In terms of assembly, interacts (via N- and C-terminus) with DDX1. Interacts (via N- and C-terminus) with C14orf166. Interacts with FAM98B. Interacts with PLEKHM1 (via N- and C-terminus). In terms of tissue distribution, expressed strongly in colorectal cancer cells. Expressed strongly in colorectal cancer tissues compared to wild-type colon samples (at protein level). Expressed strongly in colorectal cancer tissues compared to wild-type colon samples.

Its function is as follows. Positively stimulates PRMT1-induced protein arginine methylation. Involved in skeletal homeostasis. Positively regulates lysosome peripheral distribution and ruffled border formation in osteoclasts. The chain is Protein FAM98A from Homo sapiens (Human).